We begin with the raw amino-acid sequence, 306 residues long: GTP-binding protein RAD (306 aa).

The span at 1–13 (MTLNGGSGAGGSR) shows a compositional bias: gly residues. Positions 1 to 91 (MTLNGGSGAG…GDSGSEDGVY (91 aa)) are disordered. R23 carries the post-translational modification Omega-N-methylarginine. At S25 the chain carries Phosphoserine. Positions 56–88 (AATAAGTRTQGQRLDWPEGSSDSLSSGDSGSED) are enriched in low complexity. GTP contacts are provided by residues 97–104 (GAPGVGKS) and 201–204 (NKSD). The interval 276-295 (AKLFLGRIVARNSRKMAFLA) is calmodulin-binding.

This sequence belongs to the small GTPase superfamily. RGK family. In terms of assembly, interacts with Calmodulin preferentially in the inactive, GDP-bound form. Interacts with CAMK2D. Interacts with CACNB2; interaction may be involved in beta-adrenergic regulation of heart rate and contractile force. Interaction with CACNB2 regulates the trafficking of CACNA1C to the cell membrane.

It is found in the cell membrane. May regulate basal voltage-dependent L-type Ca(2+) currents and be required for beta-adrenergic augmentation of Ca(2+) influx in cardiomyocytes, thereby regulating increases in heart rate and contractile force. May play an important role in cardiac antiarrhythmia via the strong suppression of voltage-dependent L-type Ca(2+) currents. Regulates voltage-gated L-type calcium channel subunit alpha-1C trafficking to the cell membrane. Inhibits cardiac hypertrophy through the calmodulin-dependent kinase II (CaMKII) pathway. Inhibits phosphorylation and activation of CAMK2D. This Rattus norvegicus (Rat) protein is GTP-binding protein RAD (Rrad).